We begin with the raw amino-acid sequence, 850 residues long: PH domain-containing protein YHR131C (850 aa).

One can recognise a PH domain in the interval 194-306 (RIHSDLVHRS…MYLSIGISVS (113 aa)). Residues 324-338 (RRRRRRRRRRRRHTH) show a composition bias toward basic residues. Disordered regions lie at residues 324 to 348 (RRRR…GSFS), 406 to 428 (SAAS…SGCS), 451 to 494 (SSRT…GVPV), 583 to 659 (EASI…TDDS), and 793 to 850 (TTKD…QITA). Positions 406 to 416 (SAASGESSDNS) are enriched in low complexity. Over residues 417–428 (TLGSTRSLSGCS) the composition is skewed to polar residues. Residues 479–489 (HHESSGGDHPE) are compositionally biased toward basic and acidic residues. Over residues 605 to 619 (ESATDLSQSSRSLCL) the composition is skewed to polar residues. 2 stretches are compositionally biased toward acidic residues: residues 626 to 658 (INDD…DTDD) and 799 to 850 (DHGE…QITA).

The protein localises to the cytoplasm. The chain is PH domain-containing protein YHR131C from Saccharomyces cerevisiae (strain ATCC 204508 / S288c) (Baker's yeast).